Reading from the N-terminus, the 93-residue chain is Photosystem I iron-sulfur center (93 aa).

2 4Fe-4S ferredoxin-type domains span residues 13-43 (KDHE…MVPS) and 50-80 (QVVT…IRVY). Positions 23, 26, 29, 33, 60, 63, 66, and 70 each coordinate [4Fe-4S] cluster.

In terms of assembly, the eukaryotic PSI reaction center is composed of at least 11 subunits. It depends on [4Fe-4S] cluster as a cofactor.

It is found in the plastid. The protein resides in the chloroplast thylakoid membrane. It catalyses the reaction reduced [plastocyanin] + hnu + oxidized [2Fe-2S]-[ferredoxin] = oxidized [plastocyanin] + reduced [2Fe-2S]-[ferredoxin]. In terms of biological role, apoprotein for the two 4Fe-4S centers FA and FB of photosystem I (PSI); essential for photochemical activity. FB is the terminal electron acceptor of PSI, donating electrons to ferredoxin. The C-terminus interacts with PsaA/B/D and helps assemble the protein into the PSI complex. Required for binding of PsaD and PsaE to PSI. PSI is a plastocyanin-ferredoxin oxidoreductase, converting photonic excitation into a charge separation, which transfers an electron from the donor P700 chlorophyll pair to the spectroscopically characterized acceptors A0, A1, FX, FA and FB in turn. This chain is Photosystem I iron-sulfur center, found in Bigelowiella natans (Pedinomonas minutissima).